The sequence spans 463 residues: Glutamate--tRNA ligase 2 (463 aa).

The 'HIGH' region motif lies at P10–G20. The 'KMSKS' region motif lies at K238 to R242. Residue K241 coordinates ATP.

The protein belongs to the class-I aminoacyl-tRNA synthetase family. Glutamate--tRNA ligase type 1 subfamily. Monomer.

It is found in the cytoplasm. It carries out the reaction tRNA(Glu) + L-glutamate + ATP = L-glutamyl-tRNA(Glu) + AMP + diphosphate. Its function is as follows. Catalyzes the attachment of glutamate to tRNA(Glu) in a two-step reaction: glutamate is first activated by ATP to form Glu-AMP and then transferred to the acceptor end of tRNA(Glu). The protein is Glutamate--tRNA ligase 2 of Helicobacter acinonychis (strain Sheeba).